The following is a 475-amino-acid chain: Melanopsin (475 aa).

At 1–21 (MGTQHRIKVDVPDRVLYTVGS) the chain is on the extracellular side. Residues 22-42 (CVLVIGSIGITGNLLVLYAFY) traverse the membrane as a helical segment. Residues 43 to 53 (SNKRLRTPANY) are Cytoplasmic-facing. The helical transmembrane segment at 54-74 (FIMNLAASDFLMSATQAPICF) threads the bilayer. At 75–90 (LNSMHTEWILGDIGCN) the chain is on the extracellular side. A disulfide bridge connects residues Cys89 and Cys167. The chain crosses the membrane as a helical span at residues 91–111 (FYVFCGALFGITSMMTLLAIS). Topologically, residues 112–134 (VDRYCVITKPLQSIKRSSKKRSC) are cytoplasmic. Residues 135–155 (IIIAFVWLYSLGWSVCPLFGW) form a helical membrane-spanning segment. Over 156–187 (SSYIPEGLMISCTWDYVSYSPANRSYTMMLCC) the chain is Extracellular. Residue Asn178 is glycosylated (N-linked (GlcNAc...) asparagine). Residues 188–208 (FVFFIPLIIIFHCYLFMFLAI) form a helical membrane-spanning segment. At 209 to 240 (RSTGRNVQKLGSTYNRKSNVSQSVKSEWKLAK) the chain is on the cytoplasmic side. Residues 241–261 (IAFVAIVVFVLSWSPYACVTL) form a helical membrane-spanning segment. Residues 262 to 276 (IAWAGYAKTLNPYSK) are Extracellular-facing. A helical transmembrane segment spans residues 277 to 297 (SVPAVIAKASAIYNPIIYAII). N6-(retinylidene)lysine is present on Lys284. At 298–475 (HPRYRRTIRS…EQHQMEASSH (178 aa)) the chain is on the cytoplasmic side. Disordered regions lie at residues 370-390 (VEAARKKQQPHRSRSFSKQAE) and 445-475 (PFGLNSSSTEENADTSDMEVQEQHQMEASSH). Basic residues predominate over residues 375 to 384 (KKQQPHRSRS). Over residues 445 to 454 (PFGLNSSSTE) the composition is skewed to polar residues. Residues 455 to 464 (ENADTSDMEV) show a composition bias toward acidic residues. Residues 465-475 (QEQHQMEASSH) are compositionally biased toward basic and acidic residues.

It belongs to the G-protein coupled receptor 1 family. Opsin subfamily. Highest level in the lateral eye. Low level in the brain.

Its subcellular location is the cell membrane. Photoreceptor implicated in non-image-forming responses to light. May be able to isomerize covalently bound all-trans retinal back to 11-cis retinal. The protein is Melanopsin (OPN4) of Podarcis siculus (Italian wall lizard).